Consider the following 212-residue polypeptide: uncharacterized protein (212 aa).

In terms of domain architecture, NERD spans 29–146 (KGKAGEKLVK…AAFHPKCSLK (118 aa)).

This is an uncharacterized protein from Bacillus anthracis.